The sequence spans 331 residues: Vitamin B12 import system permease protein BtuC (331 aa).

9 helical membrane-spanning segments follow: residues 18–38, 64–84, 91–111, 114–134, 149–169, 194–214, 243–263, 277–297, and 305–325; these read WLFG…CAGE, LAVL…QALF, PGLL…VLLG, VLPG…ITFI, LLAG…AVYF, LWLM…SQPL, GWMV…GLVI, VLLP…DIIA, and ELPI…WLLL.

This sequence belongs to the binding-protein-dependent transport system permease family. FecCD subfamily. As to quaternary structure, the complex is composed of two ATP-binding proteins (BtuD), two transmembrane proteins (BtuC) and a solute-binding protein (BtuF).

The protein resides in the cell inner membrane. Functionally, part of the ABC transporter complex BtuCDF involved in vitamin B12 import. Involved in the translocation of the substrate across the membrane. This is Vitamin B12 import system permease protein BtuC from Klebsiella pneumoniae subsp. pneumoniae (strain ATCC 700721 / MGH 78578).